Reading from the N-terminus, the 313-residue chain is Glutaminase (313 aa).

Residues S73, N123, E167, N174, Y198, Y249, and V267 each contribute to the substrate site.

It belongs to the glutaminase family. In terms of assembly, homotetramer.

The enzyme catalyses L-glutamine + H2O = L-glutamate + NH4(+). In Streptomyces avermitilis (strain ATCC 31267 / DSM 46492 / JCM 5070 / NBRC 14893 / NCIMB 12804 / NRRL 8165 / MA-4680), this protein is Glutaminase.